A 526-amino-acid chain; its full sequence is Outer capsid protein VP5 (526 aa).

The segment at 1–42 (MGKIIKSLSRFGKKVGNALTSNTAKKIYNTIGKAAERFAESE) is involved in membrane permeabilization.

Belongs to the orbivirus VP5 family.

The protein resides in the virion. VP5 protein is one of the two proteins (with VP2) which constitute the virus particle outer capsid. Acts as a membrane permeabilization protein that mediates release of viral particles from endosomal compartments into the cytoplasm. Permeabilization activity is probably negatively regulated by VP2 and is triggered by endosomal degradation of VP2 and exposure to low pH. This is Outer capsid protein VP5 (Segment-6) from Bluetongue virus 13 (isolate USA) (BTV 13).